The primary structure comprises 517 residues: Protein disulfide isomerase-like 1-2 (517 aa).

The N-terminal stretch at 1-23 is a signal peptide; that stretch reads MAVNLVLSFALAILISSSPTAVG. In terms of domain architecture, Thioredoxin 1 spans 24–143; the sequence is VDATEELKEA…IVEYLKRQVG (120 aa). N41 carries an N-linked (GlcNAc...) asparagine glycan. Catalysis depends on nucleophile residues C61 and C64. Cysteines 61 and 64 form a disulfide. A glycan (N-linked (GlcNAc...) asparagine) is linked at N301. The 128-residue stretch at 357 to 484 folds into the Thioredoxin 2 domain; that stretch reads VEYGNLTPYV…IISFINENRG (128 aa). Residues C407 and C410 each act as nucleophile in the active site. The cysteines at positions 407 and 410 are disulfide-linked. The short motif at 514–517 is the Prevents secretion from ER element; it reads KDEL.

It belongs to the protein disulfide isomerase family.

It localises to the endoplasmic reticulum lumen. It catalyses the reaction Catalyzes the rearrangement of -S-S- bonds in proteins.. Acts as a protein-folding catalyst that interacts with nascent polypeptides to catalyze the formation, isomerization, and reduction or oxidation of disulfide bonds. May play a role in storage protein biogenesis. The chain is Protein disulfide isomerase-like 1-2 (PDIL1-2) from Oryza sativa subsp. japonica (Rice).